The following is a 384-amino-acid chain: Urea transporter 1 (384 aa).

The interval Met1–Arg23 is disordered. The next 5 helical transmembrane spans lie at Ile61 to Leu81, Pro85 to Leu105, Ala111 to Tyr131, Phe138 to Ala158, and Pro169 to Phe189. Asn206 is a glycosylation site (N-linked (GlcNAc...) asparagine). 3 helical membrane passes run Gly237–Ile257, Gly279–Leu299, and Val327–Leu347.

Belongs to the urea transporter family. As to quaternary structure, homotrimer; each subunit contains a pore through which urea permeates. Identified in a complex with STOM.

The protein localises to the cell membrane. Its subcellular location is the basolateral cell membrane. The enzyme catalyses urea(in) = urea(out). Mediates the transport of urea driven by a concentration gradient across the cell membranes of erythrocytes and the renal inner medullary collecting duct which is critical to the urinary concentrating mechanism. Facilitates water transport in erythrocytes. The polypeptide is Urea transporter 1 (SLC14A1) (Ovis aries (Sheep)).